The primary structure comprises 369 residues: RING-H2 finger protein ATL47 (369 aa).

A helical membrane pass occupies residues 52 to 72 (IILFIIVLLSVIFFICSILHL). An RING-type; atypical zinc finger spans residues 144–186 (CAVCLCEFSEDDKLRLLPNCSHAFHIDCIDTWLLSNSTCPLCR). A disordered region spans residues 332–355 (NNHPSETNLVVGGSSSSSSYVCSG). Residues 341–355 (VVGGSSSSSSYVCSG) show a composition bias toward low complexity.

This sequence belongs to the RING-type zinc finger family. ATL subfamily.

The protein resides in the membrane. It carries out the reaction S-ubiquitinyl-[E2 ubiquitin-conjugating enzyme]-L-cysteine + [acceptor protein]-L-lysine = [E2 ubiquitin-conjugating enzyme]-L-cysteine + N(6)-ubiquitinyl-[acceptor protein]-L-lysine.. Its pathway is protein modification; protein ubiquitination. The polypeptide is RING-H2 finger protein ATL47 (ATL47) (Arabidopsis thaliana (Mouse-ear cress)).